A 198-amino-acid polypeptide reads, in one-letter code: Recombination protein RecR (198 aa).

The C4-type zinc-finger motif lies at 58-73; that stretch reads CSVCGNFTDKDPCAIC. A Toprim domain is found at 81 to 175; that stretch reads SIICVIEQPK…KVTRIAHGVP (95 aa).

This sequence belongs to the RecR family.

Functionally, may play a role in DNA repair. It seems to be involved in an RecBC-independent recombinational process of DNA repair. It may act with RecF and RecO. This Clostridium botulinum (strain ATCC 19397 / Type A) protein is Recombination protein RecR.